The primary structure comprises 394 residues: Tubby-like F-box protein 2 (394 aa).

The disordered stretch occupies residues 21 to 44 (SKRSWSKSSHIAPDQTTPPLDNIP). Positions 26–44 (SKSSHIAPDQTTPPLDNIP) are enriched in polar residues. Residues 46 to 101 (SPWASLPPELLHDIIWRVEESETAWPARAAVVSCASVCKSWRGITMEIVRIPEQCG) form the F-box domain. 2 disordered regions span residues 200 to 225 (ASSTAQAQPNRRLHPKQAAPKLPTNS) and 268 to 297 (IEEEVSSSPSPKGETITTDKEIPDNSPSLR).

This sequence belongs to the TUB family. In terms of tissue distribution, ubiquitous.

The protein is Tubby-like F-box protein 2 of Arabidopsis thaliana (Mouse-ear cress).